We begin with the raw amino-acid sequence, 321 residues long: Cytochrome c biogenesis protein CcsA (321 aa).

8 helical membrane passes run 17-37 (IVSIVITIHLITLLVDEIVGL), 44-64 (GMISTFLCITGLLVTRWIYSG), 71-91 (LYESLIFLSWSFSIIHMIPYF), 98-118 (LSLVTAPSAIFTQGFATSGLL), 143-163 (MVLSYGALLCGSLLSVALLVI), 225-245 (VISLGFIFLTIGILSGAVWAN), 258-275 (ETWAFITWTIFAIYLHTR), and 286-306 (AIVASIGFIIIWICYFGVNLL).

This sequence belongs to the CcmF/CycK/Ccl1/NrfE/CcsA family. As to quaternary structure, may interact with Ccs1.

The protein localises to the plastid. The protein resides in the chloroplast thylakoid membrane. Required during biogenesis of c-type cytochromes (cytochrome c6 and cytochrome f) at the step of heme attachment. This chain is Cytochrome c biogenesis protein CcsA, found in Buxus microphylla (Littleleaf boxwood).